The chain runs to 256 residues: Fructose-1,6-bisphosphatase/inositol-1-monophosphatase (256 aa).

4 residues coordinate Mg(2+): glutamate 67, aspartate 83, leucine 85, and aspartate 86. Residues 86-88 (DGS), arginine 170, isoleucine 175, and arginine 194 each bind substrate. Aspartate 201 provides a ligand contact to Mg(2+).

It belongs to the inositol monophosphatase superfamily. FBPase class 4 family. In terms of assembly, homodimer. It depends on Mg(2+) as a cofactor.

The enzyme catalyses beta-D-fructose 1,6-bisphosphate + H2O = beta-D-fructose 6-phosphate + phosphate. It catalyses the reaction a myo-inositol phosphate + H2O = myo-inositol + phosphate. In terms of biological role, phosphatase with broad specificity; it can dephosphorylate fructose 1,6-bisphosphate (FBP) and inositol-1-phosphate (IMP). However, while possessing a high FBPase activity in vitro, does not participate in gluconeogenesis in vivo. In Thermococcus kodakarensis (strain ATCC BAA-918 / JCM 12380 / KOD1) (Pyrococcus kodakaraensis (strain KOD1)), this protein is Fructose-1,6-bisphosphatase/inositol-1-monophosphatase (suhB).